Here is a 570-residue protein sequence, read N- to C-terminus: Urease subunit alpha (570 aa).

Positions 131 to 570 (GGMDSHIHFI…LPMAQRYFLF (440 aa)) constitute a Urease domain. Ni(2+)-binding residues include H136, H138, and K219. K219 bears the N6-carboxylysine mark. H221 is a binding site for substrate. Ni(2+) contacts are provided by H248 and H274. Residue H322 is the Proton donor of the active site. D362 is a binding site for Ni(2+).

It belongs to the metallo-dependent hydrolases superfamily. Urease alpha subunit family. Heterotrimer of UreA (gamma), UreB (beta) and UreC (alpha) subunits. Three heterotrimers associate to form the active enzyme. The cofactor is Ni cation. Carboxylation allows a single lysine to coordinate two nickel ions.

It localises to the cytoplasm. The enzyme catalyses urea + 2 H2O + H(+) = hydrogencarbonate + 2 NH4(+). It participates in nitrogen metabolism; urea degradation; CO(2) and NH(3) from urea (urease route): step 1/1. The chain is Urease subunit alpha from Sinorhizobium fredii (strain NBRC 101917 / NGR234).